The chain runs to 485 residues: Fumarate hydratase, mitochondrial (485 aa).

The transit peptide at M1–N19 directs the protein to the mitochondrion. Residues S118–T120, H150–D153, S160–N162, and T208 each bind substrate. H209 acts as the Proton donor/acceptor in catalysis. The active site involves S339. Residues S340 and K345–N347 contribute to the substrate site.

This sequence belongs to the class-II fumarase/aspartase family. Fumarase subfamily. Homotetramer.

It is found in the mitochondrion. Its subcellular location is the cytoplasm. The enzyme catalyses (S)-malate = fumarate + H2O. It participates in carbohydrate metabolism; tricarboxylic acid cycle; (S)-malate from fumarate: step 1/1. Its function is as follows. Catalyzes the reversible stereospecific interconversion of fumarate to L-malate. In terms of biological role, catalyzes the hydration of fumarate to L-malate in the tricarboxylic acid (TCA) cycle to facilitate a transition step in the production of energy in the form of NADH. The polypeptide is Fumarate hydratase, mitochondrial (Dictyostelium discoideum (Social amoeba)).